Consider the following 434-residue polypeptide: A-adding tRNA nucleotidyltransferase (434 aa).

20 to 23 (GAVR) provides a ligand contact to ATP. Residues Asp33 and Asp35 each coordinate Mg(2+). ATP-binding positions include 91 to 92 (RD), Asn96, 132 to 141 (DPLRAWRAAR), and Arg177. Positions 227-339 (VFEHGVEALH…ELLPDLLSLM (113 aa)) constitute an HD domain.

Belongs to the tRNA nucleotidyltransferase/poly(A) polymerase family. The cofactor is Mg(2+).

It carries out the reaction a tRNA with a 3' CC end + ATP = a tRNA with a 3' CCA end + diphosphate. Its function is as follows. tRNA nucleotidyltransferase involved in the synthesis of the tRNA CCA terminus. Adds the terminal adenosine residue to tRNA. The protein is A-adding tRNA nucleotidyltransferase of Deinococcus radiodurans (strain ATCC 13939 / DSM 20539 / JCM 16871 / CCUG 27074 / LMG 4051 / NBRC 15346 / NCIMB 9279 / VKM B-1422 / R1).